A 399-amino-acid chain; its full sequence is Dual-specificity RNA methyltransferase RlmN (399 aa).

The active-site Proton acceptor is Glu-122. In terms of domain architecture, Radical SAM core spans 128 to 371 (ETDRGTLCVS…VRTPRGRDIL (244 aa)). Residues Cys-135 and Cys-374 are joined by a disulfide bond. [4Fe-4S] cluster is bound by residues Cys-142, Cys-146, and Cys-149. S-adenosyl-L-methionine contacts are provided by residues 200–201 (GE), Ser-232, 254–256 (SLH), and Asn-331. Cys-374 (S-methylcysteine intermediate) is an active-site residue.

Belongs to the radical SAM superfamily. RlmN family. It depends on [4Fe-4S] cluster as a cofactor.

The protein resides in the cytoplasm. The enzyme catalyses adenosine(2503) in 23S rRNA + 2 reduced [2Fe-2S]-[ferredoxin] + 2 S-adenosyl-L-methionine = 2-methyladenosine(2503) in 23S rRNA + 5'-deoxyadenosine + L-methionine + 2 oxidized [2Fe-2S]-[ferredoxin] + S-adenosyl-L-homocysteine. The catalysed reaction is adenosine(37) in tRNA + 2 reduced [2Fe-2S]-[ferredoxin] + 2 S-adenosyl-L-methionine = 2-methyladenosine(37) in tRNA + 5'-deoxyadenosine + L-methionine + 2 oxidized [2Fe-2S]-[ferredoxin] + S-adenosyl-L-homocysteine. Functionally, specifically methylates position 2 of adenine 2503 in 23S rRNA and position 2 of adenine 37 in tRNAs. m2A2503 modification seems to play a crucial role in the proofreading step occurring at the peptidyl transferase center and thus would serve to optimize ribosomal fidelity. This chain is Dual-specificity RNA methyltransferase RlmN, found in Rhodopseudomonas palustris (strain HaA2).